We begin with the raw amino-acid sequence, 50 residues long: Large ribosomal subunit protein bL33A (50 aa).

It belongs to the bacterial ribosomal protein bL33 family.

This is Large ribosomal subunit protein bL33A from Streptococcus thermophilus (strain CNRZ 1066).